Here is a 1308-residue protein sequence, read N- to C-terminus: Receptor tyrosine-protein kinase erbB-4 (1308 aa).

The N-terminal stretch at 1-25 (MKPATGLWVWVSLLVAAGTVQPSDS) is a signal peptide. Residues 26-651 (QSVCAGTENK…STLPQHARTP (626 aa)) are Extracellular-facing. The cysteines at positions 29 and 56 are disulfide-linked. Residues asparagine 138, asparagine 174, and asparagine 181 are each glycosylated (N-linked (GlcNAc...) asparagine). 12 cysteine pairs are disulfide-bonded: cysteine 156–cysteine 186, cysteine 189–cysteine 197, cysteine 193–cysteine 205, cysteine 213–cysteine 221, cysteine 217–cysteine 229, cysteine 230–cysteine 238, cysteine 234–cysteine 246, cysteine 249–cysteine 258, cysteine 262–cysteine 289, cysteine 293–cysteine 304, cysteine 308–cysteine 323, and cysteine 326–cysteine 330. A glycan (N-linked (GlcNAc...) asparagine) is linked at asparagine 253. Residues asparagine 358, asparagine 410, asparagine 473, and asparagine 495 are each glycosylated (N-linked (GlcNAc...) asparagine). Cystine bridges form between cysteine 503-cysteine 512, cysteine 507-cysteine 520, cysteine 523-cysteine 532, cysteine 536-cysteine 552, cysteine 555-cysteine 569, cysteine 559-cysteine 577, cysteine 580-cysteine 589, cysteine 593-cysteine 614, cysteine 617-cysteine 625, and cysteine 621-cysteine 633. Asparagine 548 is a glycosylation site (N-linked (GlcNAc...) asparagine). A glycan (N-linked (GlcNAc...) asparagine) is linked at asparagine 576. Asparagine 620 is a glycosylation site (N-linked (GlcNAc...) asparagine). A helical transmembrane segment spans residues 652-675 (LIAAGVIGGLFILVIVGLTFAVYV). The Nuclear localization signal motif lies at 676-684 (RRKSIKKKR). The Cytoplasmic portion of the chain corresponds to 676-1308 (RRKSIKKKRA…PPYRHRNTVV (633 aa)). The region spanning 718 to 985 (LKRVKVLGSG…RMARDPQRYL (268 aa)) is the Protein kinase domain. ATP is bound by residues 724-732 (LGSGAFGTV), lysine 751, 797-799 (QLM), and 843-848 (DLAARN). Catalysis depends on aspartate 843, which acts as the Proton acceptor. Phosphotyrosine; by autocatalysis is present on residues tyrosine 875, tyrosine 1035, tyrosine 1056, tyrosine 1150, tyrosine 1162, tyrosine 1188, tyrosine 1202, tyrosine 1242, tyrosine 1258, and tyrosine 1284. Short sequence motifs (PPxY motif) lie at residues 1032 to 1035 (PPIY) and 1053 to 1056 (PPAY). The disordered stretch occupies residues 1117-1150 (PHVQEDSSTQRYSADPTVFAPERSPRGELDEEGY). The PPxY motif 3 signature appears at 1298-1301 (PPPY). A PDZ-binding motif is present at residues 1306–1308 (TVV).

This sequence belongs to the protein kinase superfamily. Tyr protein kinase family. EGF receptor subfamily. Monomer in the absence of bound ligand. Homodimer or heterodimer with another ERBB family member upon ligand binding, thus forming heterotetramers. Interacts with EGFR and ERBB2. Interacts with CBFA2T3. Interacts with DLG2 (via its PDZ domain), DLG3 (via its PDZ domain), DLG4 (via its PDZ domain) and SNTB2 (via its PDZ domain). Interacts with MUC1. Interacts (via its PPxy motifs) with WWOX. Interacts (via the PPxY motif 3 of isoform JM-A CYT-2) with YAP1 (via the WW domain 1 of isoform 1). Interacts (isoform JM-A CYT-1 and isoform JM-B CYT-1) with WWP1. Interacts (via its intracellular domain) with TRIM28. Interacts (via the intracellular domains of both CYT-1 and CYT-2 isoforms) with KAP1; the interaction does not phosphorylate KAP1 but represses ERBB4-mediated transcriptional activity. Interacts with PRPU, DDX23, MATR3, RBM15, ILF3, KAP1, U5S1, U2SURP, ITCH, HNRNPU, AP2A1, NULC, LEO1, WWP2, IGHG1, HXK1, GRB7 and SRRT. Interacts (phosphorylated isoform JM-A CYT-1 and isoform JM-B CYT-1) with PIK3R1. Interacts with SHC1. Interacts with GRB2. Interacts (soluble intracellular domain) with STAT5A. Interacts (soluble intracellular domain) with BCL2. Interacts (phosphorylated) with STAT1. Post-translationally, isoform JM-A CYT-1 and isoform JM-A CYT-2 are processed by ADAM17. Proteolytic processing in response to ligand or 12-O-tetradecanoylphorbol-13-acetate stimulation results in the production of 120 kDa soluble receptor forms and intermediate membrane-anchored 80 kDa fragments (m80HER4), which are further processed by a presenilin-dependent gamma-secretase to release a cytoplasmic intracellular domain (E4ICD; E4ICD1/s80Cyt1 or E4ICD2/s80Cyt2, depending on the isoform). Membrane-anchored 80 kDa fragments of the processed isoform JM-A CYT-1 are more readily degraded by the proteasome than fragments of isoform JM-A CYT-2, suggesting a prevalence of E4ICD2 over E4ICD1. Isoform JM-B CYT-1 and isoform JM-B CYT-2 lack the ADAM17 cleavage site and are not processed by ADAM17, precluding further processing by gamma-secretase. In terms of processing, autophosphorylated on tyrosine residues in response to ligand binding. Autophosphorylation occurs in trans, i.e. one subunit of the dimeric receptor phosphorylates tyrosine residues on the other subunit. Ligands trigger phosphorylation at specific tyrosine residues, thereby creating binding sites for scaffold proteins and effectors. Constitutively phosphorylated at a basal level when overexpressed in heterologous systems; ligand binding leads to increased phosphorylation. Phosphorylation at Tyr-1035 is important for interaction with STAT1. Phosphorylation at Tyr-1056 is important for interaction with PIK3R1. Phosphorylation at Tyr-1242 is important for interaction with SHC1. Phosphorylation at Tyr-1188 may also contribute to the interaction with SHC1. Isoform JM-A CYT-2 is constitutively phosphorylated on tyrosine residues in a ligand-independent manner. E4ICD2 but not E4ICD1 is phosphorylated on tyrosine residues. Ubiquitinated. During mitosis, the ERBB4 intracellular domain is ubiquitinated by the APC/C complex and targeted to proteasomal degradation. Isoform JM-A CYT-1 and isoform JM-B CYT-1 are ubiquitinated by WWP1. The ERBB4 intracellular domain (E4ICD1) is ubiquitinated, and this involves NEDD4. Expressed at highest levels in brain, heart, kidney, in addition to skeletal muscle, parathyroid, cerebellum, pituitary, spleen, testis and breast. Lower levels in thymus, lung, salivary gland, and pancreas. Isoform JM-A CYT-1 and isoform JM-B CYT-1 are expressed in cerebellum, but only the isoform JM-B is expressed in the heart.

Its subcellular location is the cell membrane. It localises to the nucleus. The protein resides in the mitochondrion. The catalysed reaction is L-tyrosyl-[protein] + ATP = O-phospho-L-tyrosyl-[protein] + ADP + H(+). With respect to regulation, binding of a cognate ligand leads to dimerization and activation by autophosphorylation on tyrosine residues. In vitro kinase activity is increased by Mg(2+). Inhibited by PD153035, lapatinib, gefitinib (iressa, ZD1839), AG1478 and BIBX1382BS. Its function is as follows. Tyrosine-protein kinase that plays an essential role as cell surface receptor for neuregulins and EGF family members and regulates development of the heart, the central nervous system and the mammary gland, gene transcription, cell proliferation, differentiation, migration and apoptosis. Required for normal cardiac muscle differentiation during embryonic development, and for postnatal cardiomyocyte proliferation. Required for normal development of the embryonic central nervous system, especially for normal neural crest cell migration and normal axon guidance. Required for mammary gland differentiation, induction of milk proteins and lactation. Acts as cell-surface receptor for the neuregulins NRG1, NRG2, NRG3 and NRG4 and the EGF family members BTC, EREG and HBEGF. Ligand binding triggers receptor dimerization and autophosphorylation at specific tyrosine residues that then serve as binding sites for scaffold proteins and effectors. Ligand specificity and signaling is modulated by alternative splicing, proteolytic processing, and by the formation of heterodimers with other ERBB family members, thereby creating multiple combinations of intracellular phosphotyrosines that trigger ligand- and context-specific cellular responses. Mediates phosphorylation of SHC1 and activation of the MAP kinases MAPK1/ERK2 and MAPK3/ERK1. Isoform JM-A CYT-1 and isoform JM-B CYT-1 phosphorylate PIK3R1, leading to the activation of phosphatidylinositol 3-kinase and AKT1 and protect cells against apoptosis. Isoform JM-A CYT-1 and isoform JM-B CYT-1 mediate reorganization of the actin cytoskeleton and promote cell migration in response to NRG1. Isoform JM-A CYT-2 and isoform JM-B CYT-2 lack the phosphotyrosine that mediates interaction with PIK3R1, and hence do not phosphorylate PIK3R1, do not protect cells against apoptosis, and do not promote reorganization of the actin cytoskeleton and cell migration. Proteolytic processing of isoform JM-A CYT-1 and isoform JM-A CYT-2 gives rise to the corresponding soluble intracellular domains (4ICD) that translocate to the nucleus, promote nuclear import of STAT5A, activation of STAT5A, mammary epithelium differentiation, cell proliferation and activation of gene expression. The ERBB4 soluble intracellular domains (4ICD) colocalize with STAT5A at the CSN2 promoter to regulate transcription of milk proteins during lactation. The ERBB4 soluble intracellular domains can also translocate to mitochondria and promote apoptosis. The protein is Receptor tyrosine-protein kinase erbB-4 (ERBB4) of Homo sapiens (Human).